The chain runs to 97 residues: Protein RnfH (97 aa).

This sequence belongs to the UPF0125 (RnfH) family.

The polypeptide is Protein RnfH (Paramagnetospirillum magneticum (strain ATCC 700264 / AMB-1) (Magnetospirillum magneticum)).